The primary structure comprises 394 residues: Cell adhesion molecule 3 (394 aa).

The first 17 residues, Met-1 to Ala-17, serve as a signal peptide directing secretion. The Extracellular segment spans residues Ala-18–His-326. Positions Pro-22–Thr-120 constitute an Ig-like V-type domain. Intrachain disulfides connect Cys-45–Cys-105 and Cys-147–Cys-204. 2 Ig-like C2-type domains span residues Pro-128–Gln-223 and Pro-228–Thr-306. The disordered stretch occupies residues Ser-217 to Arg-240. Residues Ala-230–Arg-240 show a composition bias toward basic and acidic residues. Cys-249 and Cys-295 are disulfide-bonded. The helical transmembrane segment at Ala-327–Leu-347 threads the bilayer. Residues Gly-348–Ile-394 lie on the Cytoplasmic side of the membrane. A disordered region spans residues Ala-363 to Ile-394.

Belongs to the nectin family.

Its subcellular location is the cell membrane. It localises to the cell junction. In terms of biological role, may be involved in cell-cell adhesion. The sequence is that of Cell adhesion molecule 3 (cadm3) from Xenopus laevis (African clawed frog).